The chain runs to 143 residues: Small ribosomal subunit protein uS12 (143 aa).

Basic residues predominate over residues 1–20; sequence MGKCRGLRTARKLRSHRRDH. The segment at 1 to 26 is disordered; that stretch reads MGKCRGLRTARKLRSHRRDHKWHDKQ. Residue Lys-37 forms a Glycyl lysine isopeptide (Lys-Gly) (interchain with G-Cter in SUMO2) linkage. Lys-54 carries the N6-succinyllysine modification. The residue at position 62 (Pro-62) is a 3-hydroxyproline. Lys-135 is modified (N6-acetyllysine).

This sequence belongs to the universal ribosomal protein uS12 family. Component of the 40S small ribosomal subunit. Part of the small subunit (SSU) processome, composed of more than 70 proteins and the RNA chaperone small nucleolar RNA (snoRNA) U3. As to quaternary structure, (Microbial infection) Interacts with the African swine fever virus (ASFV) ubiquitin-conjugating enzyme UBCv1; this interaction probably plays a role in the viral regulation of host protein synthesis. Hydroxylation at Pro-62 affects translation termination efficiency.

The protein resides in the cytoplasm. It localises to the cytosol. It is found in the rough endoplasmic reticulum. The protein localises to the nucleus. Its subcellular location is the nucleolus. In terms of biological role, component of the ribosome, a large ribonucleoprotein complex responsible for the synthesis of proteins in the cell. The small ribosomal subunit (SSU) binds messenger RNAs (mRNAs) and translates the encoded message by selecting cognate aminoacyl-transfer RNA (tRNA) molecules. The large subunit (LSU) contains the ribosomal catalytic site termed the peptidyl transferase center (PTC), which catalyzes the formation of peptide bonds, thereby polymerizing the amino acids delivered by tRNAs into a polypeptide chain. The nascent polypeptides leave the ribosome through a tunnel in the LSU and interact with protein factors that function in enzymatic processing, targeting, and the membrane insertion of nascent chains at the exit of the ribosomal tunnel. Plays an important role in translational accuracy. Part of the small subunit (SSU) processome, first precursor of the small eukaryotic ribosomal subunit. During the assembly of the SSU processome in the nucleolus, many ribosome biogenesis factors, an RNA chaperone and ribosomal proteins associate with the nascent pre-rRNA and work in concert to generate RNA folding, modifications, rearrangements and cleavage as well as targeted degradation of pre-ribosomal RNA by the RNA exosome. The polypeptide is Small ribosomal subunit protein uS12 (RPS23) (Sus scrofa (Pig)).